Here is a 379-residue protein sequence, read N- to C-terminus: Protein RecA (379 aa).

79–86 (GPESSGKT) contacts ATP.

Belongs to the RecA family.

The protein localises to the cytoplasm. Its function is as follows. Can catalyze the hydrolysis of ATP in the presence of single-stranded DNA, the ATP-dependent uptake of single-stranded DNA by duplex DNA, and the ATP-dependent hybridization of homologous single-stranded DNAs. It interacts with LexA causing its activation and leading to its autocatalytic cleavage. The sequence is that of Protein RecA from Streptococcus agalactiae serotype III (strain NEM316).